A 20-amino-acid polypeptide reads, in one-letter code: Beta-1,3-glucan-binding protein 2 (20 aa).

Belongs to the insect beta-1,3-glucan binding protein family. In terms of assembly, monomer.

It localises to the secreted. Functionally, involved in the recognition of invading microorganisms causing their aggregation. Activates the phenoloxidase cascade. Binds specifically to beta-1,3-glucan. Binds the A.niger cell wall component alpha-1,3-glucan, a fungal pathogen-associated molecular pattern (PAMP) that activates the host immune response. This chain is Beta-1,3-glucan-binding protein 2, found in Galleria mellonella (Greater wax moth).